A 142-amino-acid polypeptide reads, in one-letter code: HTH-type transcriptional regulator MntR (142 aa).

Residues 1 to 63 (MTTPSMEDYI…YEKYRGLVLT (63 aa)) enclose the HTH dtxR-type domain. Positions 8, 11, 77, 99, 102, and 103 each coordinate Cd(2+). 6 residues coordinate Mn(2+): aspartate 8, glutamate 11, histidine 77, glutamate 99, glutamate 102, and histidine 103.

The protein belongs to the DtxR/MntR family. In terms of assembly, homodimer.

It localises to the cytoplasm. DNA binding is strongly activated by Mn(2+) and Cd(2+), but it is poorly activated by non-cognate metal cations, including Co(2+), Fe(2+), Ni(2+), Ca(2+) and Zn(2+). In the strict absence of divalent transition metal ions, MntR has a low affinity for DNA. In terms of biological role, central regulator of manganese homeostasis that regulates the expression of both manganese uptake and efflux systems. In the presence of high levels of manganese, it mediates repression of the manganese uptake systems MntH and MntABCD and activation of the efflux systems MneP and MneS. Binds with high affinity to the regulatory regions of its target genes. The manganese concentration required for activation of efflux is higher than that for repression of uptake. In Bacillus subtilis (strain 168), this protein is HTH-type transcriptional regulator MntR.